The chain runs to 592 residues: Aspartate--tRNA(Asp/Asn) ligase (592 aa).

Glu175 lines the L-aspartate pocket. Positions 199–202 are aspartate; it reads QLFK. Arg221 contacts L-aspartate. ATP contacts are provided by residues 221–223 and Gln230; that span reads RDE. His450 is an L-aspartate binding site. Residue Glu483 participates in ATP binding. Residue Arg490 participates in L-aspartate binding. Position 535–538 (535–538) interacts with ATP; that stretch reads GLDR.

This sequence belongs to the class-II aminoacyl-tRNA synthetase family. Type 1 subfamily. Homodimer.

It is found in the cytoplasm. It catalyses the reaction tRNA(Asx) + L-aspartate + ATP = L-aspartyl-tRNA(Asx) + AMP + diphosphate. Aspartyl-tRNA synthetase with relaxed tRNA specificity since it is able to aspartylate not only its cognate tRNA(Asp) but also tRNA(Asn). Reaction proceeds in two steps: L-aspartate is first activated by ATP to form Asp-AMP and then transferred to the acceptor end of tRNA(Asp/Asn). This Acinetobacter baumannii (strain ATCC 17978 / DSM 105126 / CIP 53.77 / LMG 1025 / NCDC KC755 / 5377) protein is Aspartate--tRNA(Asp/Asn) ligase.